The following is a 189-amino-acid chain: Potassium-transporting ATPase KdpC subunit (189 aa).

The chain crosses the membrane as a helical span at residues 6–26; sequence PAILLFIMFTIICGGIYPALV.

The protein belongs to the KdpC family. The system is composed of three essential subunits: KdpA, KdpB and KdpC.

It localises to the cell inner membrane. Its function is as follows. Part of the high-affinity ATP-driven potassium transport (or Kdp) system, which catalyzes the hydrolysis of ATP coupled with the electrogenic transport of potassium into the cytoplasm. This subunit acts as a catalytic chaperone that increases the ATP-binding affinity of the ATP-hydrolyzing subunit KdpB by the formation of a transient KdpB/KdpC/ATP ternary complex. This chain is Potassium-transporting ATPase KdpC subunit, found in Trichlorobacter lovleyi (strain ATCC BAA-1151 / DSM 17278 / SZ) (Geobacter lovleyi).